We begin with the raw amino-acid sequence, 204 residues long: Peptidyl-tRNA hydrolase 2 (204 aa).

Y37 provides a ligand contact to tRNA. H42 acts as the Proton acceptor in catalysis. The tRNA site is built by F86, N88, and N134.

It belongs to the PTH family. As to quaternary structure, monomer.

The protein resides in the cytoplasm. The enzyme catalyses an N-acyl-L-alpha-aminoacyl-tRNA + H2O = an N-acyl-L-amino acid + a tRNA + H(+). In terms of biological role, hydrolyzes ribosome-free peptidyl-tRNAs (with 1 or more amino acids incorporated), which drop off the ribosome during protein synthesis, or as a result of ribosome stalling. Its function is as follows. Catalyzes the release of premature peptidyl moieties from peptidyl-tRNA molecules trapped in stalled 50S ribosomal subunits, and thus maintains levels of free tRNAs and 50S ribosomes. The polypeptide is Peptidyl-tRNA hydrolase 2 (Corynebacterium glutamicum (strain ATCC 13032 / DSM 20300 / JCM 1318 / BCRC 11384 / CCUG 27702 / LMG 3730 / NBRC 12168 / NCIMB 10025 / NRRL B-2784 / 534)).